The sequence spans 510 residues: ATP synthase subunit alpha (510 aa).

Residue 169–176 (GDRQTGKT) coordinates ATP.

This sequence belongs to the ATPase alpha/beta chains family. F-type ATPases have 2 components, CF(1) - the catalytic core - and CF(0) - the membrane proton channel. CF(1) has five subunits: alpha(3), beta(3), gamma(1), delta(1), epsilon(1). CF(0) has four main subunits: a(1), b(1), b'(1) and c(9-12).

Its subcellular location is the cell inner membrane. It catalyses the reaction ATP + H2O + 4 H(+)(in) = ADP + phosphate + 5 H(+)(out). Produces ATP from ADP in the presence of a proton gradient across the membrane. The alpha chain is a regulatory subunit. This Rhodopseudomonas palustris (strain ATCC BAA-98 / CGA009) protein is ATP synthase subunit alpha.